The chain runs to 339 residues: Biotin synthase (339 aa).

Residues 47-276 (FYGKKVKLNM…SKEIRISGGR (230 aa)) form the Radical SAM core domain. [4Fe-4S] cluster-binding residues include Cys-65, Cys-69, and Cys-72. Positions 109, 141, 201, and 271 each coordinate [2Fe-2S] cluster.

It belongs to the radical SAM superfamily. Biotin synthase family. In terms of assembly, homodimer. [4Fe-4S] cluster serves as cofactor. It depends on [2Fe-2S] cluster as a cofactor.

It carries out the reaction (4R,5S)-dethiobiotin + (sulfur carrier)-SH + 2 reduced [2Fe-2S]-[ferredoxin] + 2 S-adenosyl-L-methionine = (sulfur carrier)-H + biotin + 2 5'-deoxyadenosine + 2 L-methionine + 2 oxidized [2Fe-2S]-[ferredoxin]. It participates in cofactor biosynthesis; biotin biosynthesis; biotin from 7,8-diaminononanoate: step 2/2. Its function is as follows. Catalyzes the conversion of dethiobiotin (DTB) to biotin by the insertion of a sulfur atom into dethiobiotin via a radical-based mechanism. The sequence is that of Biotin synthase from Bacillus velezensis (strain DSM 23117 / BGSC 10A6 / LMG 26770 / FZB42) (Bacillus amyloliquefaciens subsp. plantarum).